A 304-amino-acid polypeptide reads, in one-letter code: Probable HTH-type transcriptional regulator LgoR (304 aa).

The 70-residue stretch at 1-70 (MSRSQNLRHN…VGNDYVIARK (70 aa)) folds into the HTH gntR-type domain. A DNA-binding region (H-T-H motif) is located at residues 31 to 50 (QSALAEMYNISRTTVRHILS).

In terms of biological role, may be a positive transcriptional regulator for lgoD and/or lgoT. Is essential for growth on L-galactonate as the sole carbon source. In Escherichia coli (strain K12), this protein is Probable HTH-type transcriptional regulator LgoR (lgoR).